The chain runs to 168 residues: Shikimate kinase (168 aa).

ATP is bound at residue 10 to 15; that stretch reads CSGKST. A Mg(2+)-binding site is contributed by Ser-14. Substrate-binding residues include Asp-32, Arg-56, and Gly-78. Arg-116 is an ATP binding site. Arg-133 contributes to the substrate binding site.

It belongs to the shikimate kinase family. Monomer. Mg(2+) is required as a cofactor.

The protein resides in the cytoplasm. The catalysed reaction is shikimate + ATP = 3-phosphoshikimate + ADP + H(+). Its pathway is metabolic intermediate biosynthesis; chorismate biosynthesis; chorismate from D-erythrose 4-phosphate and phosphoenolpyruvate: step 5/7. Catalyzes the specific phosphorylation of the 3-hydroxyl group of shikimic acid using ATP as a cosubstrate. The sequence is that of Shikimate kinase from Aquifex aeolicus (strain VF5).